Reading from the N-terminus, the 582-residue chain is PCNA-interacting partner (582 aa).

2 stretches are compositionally biased toward polar residues: residues 471–487 (GVNS…SSGN) and 501–510 (KSSSLTGNTS). Residues 471–514 (GVNSSVGRPTIGTSSGNVHLGRSEKEKVARKSSSLTGNTSSKRK) form a disordered region.

This sequence belongs to the PARI family. In terms of assembly, interacts with RAD51 and PCNA. Interacts with PARP1. Interacts with TASOR.

It is found in the cytoplasm. The protein resides in the nucleus. In terms of biological role, required to suppress inappropriate homologous recombination, thereby playing a central role DNA repair and in the maintenance of genomic stability. Antagonizes homologous recombination by interfering with the formation of the RAD51-DNA homologous recombination structure. Binds single-strand DNA and poly(A) homopolymers. Positively regulate the poly(ADP-ribosyl)ation activity of PARP1; however such function may be indirect. The polypeptide is PCNA-interacting partner (PARPBP) (Bos taurus (Bovine)).